The following is a 103-amino-acid chain: Small ribosomal subunit protein uS10 (103 aa).

The protein belongs to the universal ribosomal protein uS10 family. Part of the 30S ribosomal subunit.

Involved in the binding of tRNA to the ribosomes. This is Small ribosomal subunit protein uS10 from Alteromonas mediterranea (strain DSM 17117 / CIP 110805 / LMG 28347 / Deep ecotype).